We begin with the raw amino-acid sequence, 368 residues long: MISDQTHMRRCLTLAKTAIGKTAPNPLVGSVIVQGDEIVGQGFHPQAGQPHGEIFALWEAGDRAKGATLYVNLEPCNHQGRTPPCTEAIIQAGIAKVVVGMVDPNPLVAGKGISRLRQAGIEVKVGVEEEACQRLNEAFCFRIKHQRPFGIFKYAMTLDGKIATAQAHSSWVTSSSARHWVHQLRSQCQAVIIGGNTVRRDNPLLTNHGVGEVNPLRVVLSRSLDLPIEAQLWDQDVAKTLVITEKTCDRNTLSHLEKLEVETLVLEQLTPLAVMEELYQRNCLQVLWECGGILAAEAIAMGTVQKVHAFLAPKIIGGVAAPTPVGELGFQQMTQALNLTDLHCQAIGPDWLFTGYLCGNDDNGQSNI.

The tract at residues methionine 1–glutamine 146 is deaminase. Residues isoleucine 2–lysine 124 enclose the CMP/dCMP-type deaminase domain. Histidine 51 is a binding site for Zn(2+). Catalysis depends on glutamate 53, which acts as the Proton donor. Cysteine 76 and cysteine 85 together coordinate Zn(2+). A reductase region spans residues arginine 147 to isoleucine 368. An NADP(+)-binding site is contributed by alanine 155. Position 169 (serine 169) interacts with substrate. Tryptophan 171 contributes to the NADP(+) binding site. A substrate-binding site is contributed by arginine 185. Residues threonine 197 and aspartate 201 each coordinate NADP(+). Residues leucine 205 and glutamate 289 each coordinate substrate. Residue glycine 291–glutamate 297 participates in NADP(+) binding.

This sequence in the N-terminal section; belongs to the cytidine and deoxycytidylate deaminase family. The protein in the C-terminal section; belongs to the HTP reductase family. The cofactor is Zn(2+).

It catalyses the reaction 2,5-diamino-6-hydroxy-4-(5-phosphoribosylamino)-pyrimidine + H2O + H(+) = 5-amino-6-(5-phospho-D-ribosylamino)uracil + NH4(+). The enzyme catalyses 5-amino-6-(5-phospho-D-ribitylamino)uracil + NADP(+) = 5-amino-6-(5-phospho-D-ribosylamino)uracil + NADPH + H(+). The protein operates within cofactor biosynthesis; riboflavin biosynthesis; 5-amino-6-(D-ribitylamino)uracil from GTP: step 2/4. It functions in the pathway cofactor biosynthesis; riboflavin biosynthesis; 5-amino-6-(D-ribitylamino)uracil from GTP: step 3/4. Functionally, converts 2,5-diamino-6-(ribosylamino)-4(3h)-pyrimidinone 5'-phosphate into 5-amino-6-(ribosylamino)-2,4(1h,3h)-pyrimidinedione 5'-phosphate. This is Riboflavin biosynthesis protein RibD (ribD) from Synechocystis sp. (strain ATCC 27184 / PCC 6803 / Kazusa).